The chain runs to 497 residues: uncharacterized protein (497 aa).

2 ABC transporter domains span residues 9–247 (VSVR…MGQA) and 256–496 (ARPA…TGMA). 41 to 48 (GGNGAGKS) lines the ATP pocket.

This sequence belongs to the ABC transporter superfamily. Ribose importer (TC 3.A.1.2.1) family.

It localises to the cell membrane. Probably part of the binding-protein-dependent transport system y4mIJK. This system probably transports a sugar. Probably responsible for energy coupling to the transport system. This is an uncharacterized protein from Sinorhizobium fredii (strain NBRC 101917 / NGR234).